The following is a 308-amino-acid chain: tRNA pseudouridine synthase B (308 aa).

Asp-47 (nucleophile) is an active-site residue.

Belongs to the pseudouridine synthase TruB family. Type 1 subfamily.

The catalysed reaction is uridine(55) in tRNA = pseudouridine(55) in tRNA. Responsible for synthesis of pseudouridine from uracil-55 in the psi GC loop of transfer RNAs. This is tRNA pseudouridine synthase B from Xanthomonas axonopodis pv. citri (strain 306).